Consider the following 356-residue polypeptide: Protein-glutamate methylesterase/protein-glutamine glutaminase 2 (356 aa).

The region spanning 4–121 is the Response regulatory domain; sequence RALVVDDSAL…SQSMPEMAEE (118 aa). At aspartate 55 the chain carries 4-aspartylphosphate. One can recognise a CheB-type methylesterase domain in the interval 161–356; the sequence is KAAPRNILAI…MAEEIIRIIG (196 aa). Residues serine 173, histidine 200, and aspartate 300 contribute to the active site.

The protein belongs to the CheB family. In terms of processing, phosphorylated by CheA. Phosphorylation of the N-terminal regulatory domain activates the methylesterase activity.

It localises to the cytoplasm. The catalysed reaction is [protein]-L-glutamate 5-O-methyl ester + H2O = L-glutamyl-[protein] + methanol + H(+). It carries out the reaction L-glutaminyl-[protein] + H2O = L-glutamyl-[protein] + NH4(+). Involved in chemotaxis. Part of a chemotaxis signal transduction system that modulates chemotaxis in response to various stimuli. Catalyzes the demethylation of specific methylglutamate residues introduced into the chemoreceptors (methyl-accepting chemotaxis proteins or MCP) by CheR. Also mediates the irreversible deamidation of specific glutamine residues to glutamic acid. The sequence is that of Protein-glutamate methylesterase/protein-glutamine glutaminase 2 from Methanosarcina acetivorans (strain ATCC 35395 / DSM 2834 / JCM 12185 / C2A).